The chain runs to 297 residues: Trimeric intracellular cation channel type A (297 aa).

Residues 1 to 18 (MDLISSLSLGELALSFSR) are Lumenal-facing. The helical transmembrane segment at 19 to 39 (VPLFPVFDLSYFIVSIIYLKY) threads the bilayer. The Cytoplasmic portion of the chain corresponds to 40 to 51 (EPGSVELSRRHP). The chain crosses the membrane as a helical span at residues 52 to 72 (VASWLCAMLHCFGSYILADLL). Topologically, residues 73-85 (LGEPIIDYFSNSS) are lumenal. G74 is a binding site for Ca(2+). Residues 86–106 (SILLASGVWYLIFFCPLDLFY) traverse the membrane as a helical segment. Over 107–143 (KCVCFLPVKLIFVAMKEVVRVRKIAVGIHHAHHYHHG) the chain is Cytoplasmic. Positions 122 and 126 each coordinate a 1,2-diacyl-sn-glycero-3-phospho-(1D-myo-inositol-4,5-bisphosphate). Residues 144–164 (WFIMIATGWVKGSGVALLSNL) form a helical membrane-spanning segment. Topologically, residues 165–177 (EQLLRGVWKPETN) are lumenal. The helical transmembrane segment at 178–198 (EILHMSFPTKASLYGAILFTL) threads the bilayer. Topologically, residues 199–208 (QQTRWLPVSK) are cytoplasmic. A helical membrane pass occupies residues 209 to 229 (ASLIFVFTMFMVSCKVFLTAT). Residues 230-233 (HSHS) are Lumenal-facing. Residues 234–254 (SPFDVLEGYICPVLFGATWGG) traverse the membrane as a helical segment. The Cytoplasmic portion of the chain corresponds to 255 to 297 (DHHHDNHGAPHGMGLGTQHSGLPAKAKEELSEGFRKKKTKKAD). Positions 259-297 (DNHGAPHGMGLGTQHSGLPAKAKEELSEGFRKKKTKKAD) are disordered. Basic and acidic residues predominate over residues 279-288 (KAKEELSEGF).

The protein belongs to the TMEM38 family. In terms of assembly, homotrimer; conformation seems to be controled by binding to diacylglycerol (DAG).

It is found in the sarcoplasmic reticulum membrane. The protein resides in the nucleus membrane. It catalyses the reaction K(+)(in) = K(+)(out). Its activity is regulated as follows. Channel activity is activated by a change of voltage within the sarcoplasmic reticulum lumen and blocked by luminal high Ca(2+) levels. Its function is as follows. Intracellular monovalent cation channel required for maintenance of rapid intracellular calcium release. Acts as a potassium counter-ion channel that functions in synchronization with calcium release from intracellular stores. Opened by a change of voltage within the sarcoplasmic reticulum lumen. The chain is Trimeric intracellular cation channel type A from Rattus norvegicus (Rat).